The following is a 180-amino-acid chain: Adenine phosphoribosyltransferase (180 aa).

Belongs to the purine/pyrimidine phosphoribosyltransferase family. In terms of assembly, homodimer.

It localises to the cytoplasm. It carries out the reaction AMP + diphosphate = 5-phospho-alpha-D-ribose 1-diphosphate + adenine. It functions in the pathway purine metabolism; AMP biosynthesis via salvage pathway; AMP from adenine: step 1/1. Catalyzes a salvage reaction resulting in the formation of AMP, that is energically less costly than de novo synthesis. This chain is Adenine phosphoribosyltransferase, found in Actinobacillus succinogenes (strain ATCC 55618 / DSM 22257 / CCUG 43843 / 130Z).